The chain runs to 409 residues: Peptidase T (409 aa).

His-78 contacts Zn(2+). Residue Asp-80 is part of the active site. Residue Asp-140 coordinates Zn(2+). Residue Glu-174 is the Proton acceptor of the active site. Residues Glu-175, Asp-197, and His-379 each coordinate Zn(2+).

Belongs to the peptidase M20B family. Zn(2+) is required as a cofactor.

The protein resides in the cytoplasm. The enzyme catalyses Release of the N-terminal residue from a tripeptide.. Cleaves the N-terminal amino acid of tripeptides. The polypeptide is Peptidase T (Aliivibrio fischeri (strain ATCC 700601 / ES114) (Vibrio fischeri)).